Reading from the N-terminus, the 391-residue chain is Elongation factor Tu 1 (391 aa).

The tr-type G domain maps to Lys10–Glu201. A G1 region spans residues Gly19 to Thr26. Position 19-26 (Gly19–Thr26) interacts with GTP. Thr26 serves as a coordination point for Mg(2+). The segment at Gly55 to Ser59 is G2. The tract at residues Asp76–Gly79 is G3. Residues Asp76–His80 and Asn131–Asp134 each bind GTP. The tract at residues Asn131–Asp134 is G4. The interval Ser169–Leu171 is G5.

Belongs to the TRAFAC class translation factor GTPase superfamily. Classic translation factor GTPase family. EF-Tu/EF-1A subfamily. Monomer.

The protein localises to the cytoplasm. The catalysed reaction is GTP + H2O = GDP + phosphate + H(+). Functionally, GTP hydrolase that promotes the GTP-dependent binding of aminoacyl-tRNA to the A-site of ribosomes during protein biosynthesis. In Bartonella quintana (strain Toulouse) (Rochalimaea quintana), this protein is Elongation factor Tu 1.